The primary structure comprises 633 residues: DNA-directed RNA polymerase subunit beta' (633 aa).

4 residues coordinate Zn(2+): Cys72, Cys74, Cys87, and Cys90. Positions 468, 470, and 472 each coordinate Mg(2+).

This sequence belongs to the RNA polymerase beta' chain family. RpoC1 subfamily. In plastids the minimal PEP RNA polymerase catalytic core is composed of four subunits: alpha, beta, beta', and beta''. When a (nuclear-encoded) sigma factor is associated with the core the holoenzyme is formed, which can initiate transcription. Mg(2+) serves as cofactor. It depends on Zn(2+) as a cofactor.

The protein localises to the plastid. The protein resides in the chloroplast. It carries out the reaction RNA(n) + a ribonucleoside 5'-triphosphate = RNA(n+1) + diphosphate. In terms of biological role, DNA-dependent RNA polymerase catalyzes the transcription of DNA into RNA using the four ribonucleoside triphosphates as substrates. The polypeptide is DNA-directed RNA polymerase subunit beta' (Cyanidium caldarium (Red alga)).